Consider the following 259-residue polypeptide: Ribonuclease HII (259 aa).

In terms of domain architecture, RNase H type-2 spans T70 to E258. 3 residues coordinate a divalent metal cation: D76, E77, and D168.

Belongs to the RNase HII family. Mn(2+) serves as cofactor. Requires Mg(2+) as cofactor.

It is found in the cytoplasm. The enzyme catalyses Endonucleolytic cleavage to 5'-phosphomonoester.. Endonuclease that specifically degrades the RNA of RNA-DNA hybrids. The sequence is that of Ribonuclease HII from Streptococcus pneumoniae (strain Taiwan19F-14).